The sequence spans 388 residues: Alpha-2B adrenergic receptor (388 aa).

Residues 1-25 (AIAAVITFLILFTIFGNALVILAVL) traverse the membrane as a helical segment. The Cytoplasmic segment spans residues 26–36 (TSRSLRAPQNL). A helical membrane pass occupies residues 37–62 (FLVSLAAADILVATLIIPFSLANELL). The Extracellular portion of the chain corresponds to 63–72 (GYWYFRRTWC). Residues cysteine 72 and cysteine 151 are joined by a disulfide bond. Residues 73 to 95 (EVYLALDVLFCTSSIVHLCAISL) form a helical membrane-spanning segment. Topologically, residues 96-117 (DRYWAVSRALEYNSKRTPRXIK) are cytoplasmic. A helical transmembrane segment spans residues 118–140 (CIILTVWLIAAAISLPPLIYKGD). The Extracellular segment spans residues 141–156 (QGPQPRGRPQCKLNQE). Residues 157–180 (AWYILSSSIGSFFAPCLIMILVYL) form a helical membrane-spanning segment. Topologically, residues 181–352 (RIYVIAKRSN…LTREKRFTFV (172 aa)) are cytoplasmic. Positions 193–309 (GPRAKGASRE…ASACNPPLQQ (117 aa)) are disordered. Over residues 239 to 249 (PTGEKEGKTPE) the composition is skewed to basic and acidic residues. A compositionally biased stretch (acidic residues) spans 279–291 (PEEEAEEEEEECE). Residues 292-302 (PQAAPASSASA) show a composition bias toward low complexity. The chain crosses the membrane as a helical span at residues 353–376 (LAVVIGVFVLCWFPFFFSYSLGAI). The Extracellular portion of the chain corresponds to 377-385 (CPQRCKVPH). The helical transmembrane segment at 386 to 388 (GLF) threads the bilayer.

Belongs to the G-protein coupled receptor 1 family. Adrenergic receptor subfamily. ADRA2B sub-subfamily. In terms of assembly, interacts with RAB26. Interacts with PPP1R9B.

The protein resides in the cell membrane. Its function is as follows. Alpha-2 adrenergic receptors mediate the catecholamine-induced inhibition of adenylate cyclase through the action of G proteins. This Orycteropus afer (Aardvark) protein is Alpha-2B adrenergic receptor (ADRA2B).